The primary structure comprises 510 residues: 2,3-bisphosphoglycerate-independent phosphoglycerate mutase (510 aa).

Positions 12 and 62 each coordinate Mn(2+). Serine 62 (phosphoserine intermediate) is an active-site residue. Substrate contacts are provided by residues histidine 123, 153–154 (RD), arginine 185, arginine 191, 261–264 (RPDR), and lysine 336. Mn(2+) contacts are provided by aspartate 403, histidine 407, aspartate 444, histidine 445, and histidine 462.

The protein belongs to the BPG-independent phosphoglycerate mutase family. Monomer. It depends on Mn(2+) as a cofactor.

The enzyme catalyses (2R)-2-phosphoglycerate = (2R)-3-phosphoglycerate. The protein operates within carbohydrate degradation; glycolysis; pyruvate from D-glyceraldehyde 3-phosphate: step 3/5. Essential for rapid growth and for sporulation. Catalyzes the interconversion of 2-phosphoglycerate and 3-phosphoglycerate. This chain is 2,3-bisphosphoglycerate-independent phosphoglycerate mutase, found in Priestia megaterium (strain DSM 319 / IMG 1521) (Bacillus megaterium).